The primary structure comprises 48 residues: Large ribosomal subunit protein bL32 (48 aa).

Belongs to the bacterial ribosomal protein bL32 family.

The sequence is that of Large ribosomal subunit protein bL32 from Helicobacter pylori (strain P12).